The sequence spans 327 residues: MDLYPEENTQSEQSQNSENNMQIFKSETSDGFSSDLKISNDQLKNISKTQLTLEKEKIFKMPNVLSQVMKKAFSRKNEILYCVSTKELSVDIHDATGKVYLPLITKEEINKRLSSLKPEVRRTMSMVHLGAVKILLKAQFRNGIDTPIKIALIDDRINSRRDCLLGAAKGNLAYGKFMFTVYPKFGISLNTQRLNQTLSLIHDFENKNLMNKGDKVMTITYIVGYALTNSHHSIDYQSNATIELEDVFQEIGNIQQSEFCTIQNDECNWAIDIAQNKALLGAKTKTQIGNSLQIGNIASSSSTENELARVSQNIDLLKNKLKEICGE.

Residues 297-327 are a coiled coil; sequence IASSSSTENELARVSQNIDLLKNKLKEICGE.

The protein belongs to the caulimoviridae movement protein family. As to quaternary structure, homotrimer, through the coiled-coil domain. Interacts with VAP. May interact (via N-terminus) with host prenylated Rab acceptor protein 1D (PRA1D).

The protein localises to the host cell junction. It localises to the host plasmodesma. Transports viral genome to neighboring plant cells directly through plasmosdesmata, without any budding. The movement protein allows efficient cell to cell propagation, by bypassing the host cell wall barrier. Acts by forming tubules structures that increase the size exclusion limit (SEL) of plasmodesmata, thereby allowing viral ribonucleocapsids to spread directly to neighboring cells. The sequence is that of Movement protein from Cauliflower mosaic virus (strain D/H) (CaMV).